The primary structure comprises 244 residues: MKILIPTAKELNTQVAQIEPESLSEKTKLIIRALSQYSVADLAQLYQIRPEKAKEEYQRIQKLQNETALTYPALYLFDGLMYRNIKRKNLTKEEEQYVQNHLLITSSLYGVIPALAPIAPHRLDFMTKLKVEKQSLKKLWTETYGQAVADQEILLSLLSSEFEEVFPKEVRDKMIRFKFMEEKDGKRKIHSTISKKARGQFLSYLIENHITKLSDIKQSSFSGFKFQENLSQEREFVFVKKVDG.

This sequence belongs to the UPF0246 family.

This is UPF0246 protein SGO_1307 from Streptococcus gordonii (strain Challis / ATCC 35105 / BCRC 15272 / CH1 / DL1 / V288).